The following is a 331-amino-acid chain: Glycerol-3-phosphate dehydrogenase [NAD(P)+] (331 aa).

NADPH contacts are provided by tryptophan 11 and lysine 101. Lysine 101, glycine 132, and serine 134 together coordinate sn-glycerol 3-phosphate. Alanine 136 contributes to the NADPH binding site. Positions 188, 241, 251, 252, and 253 each coordinate sn-glycerol 3-phosphate. The active-site Proton acceptor is lysine 188. Arginine 252 serves as a coordination point for NADPH. Glutamate 278 serves as a coordination point for NADPH.

The protein belongs to the NAD-dependent glycerol-3-phosphate dehydrogenase family.

It is found in the cytoplasm. The catalysed reaction is sn-glycerol 3-phosphate + NAD(+) = dihydroxyacetone phosphate + NADH + H(+). It catalyses the reaction sn-glycerol 3-phosphate + NADP(+) = dihydroxyacetone phosphate + NADPH + H(+). Its pathway is membrane lipid metabolism; glycerophospholipid metabolism. Catalyzes the reduction of the glycolytic intermediate dihydroxyacetone phosphate (DHAP) to sn-glycerol 3-phosphate (G3P), the key precursor for phospholipid synthesis. The sequence is that of Glycerol-3-phosphate dehydrogenase [NAD(P)+] from Phytoplasma mali (strain AT).